A 1097-amino-acid polypeptide reads, in one-letter code: Cyclin-T (1097 aa).

3 disordered regions span residues 319–782 (SNIT…SNGI), 804–936 (LLKP…SLQA), and 985–1097 (AAPV…YNKK). Residues 332–350 (DSRDRDRDRERERERERDP) are compositionally biased toward basic and acidic residues. Low complexity-rich tracts occupy residues 373–390 (SSSV…SSSS), 420–456 (PSSH…GRPS), 467–478 (GMPPVGVGMPPH), and 489–511 (PQQP…SGMS). Over residues 580–591 (LPYSQSQSYGHM) the composition is skewed to polar residues. Low complexity predominate over residues 592 to 606 (QQQPVPQSQQQQMPP). Residues 609 to 620 (SQHSLQSKNSLF) show a composition bias toward polar residues. Positions 652-675 (HDYKLNSHPRDKESPKKERLTPTK) are enriched in basic and acidic residues. The segment covering 687 to 698 (GSGNSSSGSGSS) has biased composition (low complexity). Residues 860–870 (GEIKEESSSKS) show a composition bias toward basic and acidic residues. Residues 871–883 (EKKKKKDKHKHKE) are compositionally biased toward basic residues. Residues 884-895 (KDKSKDKTEKEE) are compositionally biased toward basic and acidic residues. The residue at position 916 (S916) is a Phosphoserine. A compositionally biased stretch (gly residues) spans 993–1007 (GAGGGGYSSSGGSSS). Basic and acidic residues predominate over residues 1016–1031 (SDRDRDKESKKNKSQD). Positions 1037–1050 (GAGGGIFNPLGGAG) are enriched in gly residues. Positions 1087–1097 (APPPMPVYNKK) are enriched in pro residues.

It belongs to the cyclin family. Cyclin C subfamily. As to quaternary structure, component of the super elongation complex (SEC), at least composed of Ell, Cdk9, cyclin-T (CycT), lilli and ear. Associates with CDK9 to form P-TEFb.

The protein localises to the nucleus. Regulatory subunit of the cyclin-dependent kinase pair (CDK9/cyclin T) complex, also called positive transcription elongation factor B (P-TEFb), which is proposed to facilitate the transition from abortive to production elongation by phosphorylating the CTD (carboxy-terminal domain) of the large subunit of RNA polymerase II (RNAP II). The polypeptide is Cyclin-T (CycT) (Drosophila melanogaster (Fruit fly)).